A 160-amino-acid polypeptide reads, in one-letter code: Large ribosomal subunit protein eL29 (160 aa).

Residues Met1 to Ser26 are compositionally biased toward basic residues. The interval Met1–Leu32 is disordered. At Lys5 the chain carries N6-methyllysine. The residue at position 31 (Ser31) is a Phosphoserine. Residue Lys33 is modified to N6-acetyllysine. Residues Cys119–Gln160 form a disordered region. Low complexity predominate over residues Pro121–Ala141.

It belongs to the eukaryotic ribosomal protein eL29 family. In terms of assembly, component of the large ribosomal subunit.

It localises to the cytoplasm. Component of the large ribosomal subunit. The ribosome is a large ribonucleoprotein complex responsible for the synthesis of proteins in the cell. The sequence is that of Large ribosomal subunit protein eL29 (RPL29) from Sus scrofa (Pig).